We begin with the raw amino-acid sequence, 309 residues long: MPLPDTFSESVRIAVIGGTGISALEAEGFTAVASLDIQTPYGAPGSPLTILKTPQNTPIAFLSRHGLHHELTPTEIPNRANIAALRSIGVRSIIAFSAVGSLQEHIRPRDFVVPSQIIDRTKGLRASTFFEGGLVGHVGFADPFDSELSKVVFDIGSDGVLNGEGVKMHKDALLICMEGPQFSTRAESNLYRSWGGDVINMSALPEAKLAKEAEIAYVMVCMSTDYDCWKTNEAAVTVETVMGNMHANGANAKHLAAAILKELAKEEHQDLVGAKHLEGLSKWACCTAPAGRKAEVVKKIEFMLPGYFS.

Residues T19, 64–65, and 97–98 contribute to the phosphate site; these read RH and SA. M201 lines the substrate pocket. S202 serves as a coordination point for phosphate. 225–227 is a binding site for substrate; that stretch reads DYD.

It belongs to the PNP/MTAP phosphorylase family. MTAP subfamily. In terms of assembly, homotrimer.

Its subcellular location is the cytoplasm. It is found in the nucleus. It carries out the reaction S-methyl-5'-thioadenosine + phosphate = 5-(methylsulfanyl)-alpha-D-ribose 1-phosphate + adenine. The protein operates within amino-acid biosynthesis; L-methionine biosynthesis via salvage pathway; S-methyl-5-thio-alpha-D-ribose 1-phosphate from S-methyl-5'-thioadenosine (phosphorylase route): step 1/1. In terms of biological role, catalyzes the reversible phosphorylation of S-methyl-5'-thioadenosine (MTA) to adenine and 5-methylthioribose-1-phosphate. Involved in the breakdown of MTA, a major by-product of polyamine biosynthesis. Responsible for the first step in the methionine salvage pathway after MTA has been generated from S-adenosylmethionine. Has broad substrate specificity with 6-aminopurine nucleosides as preferred substrates. This chain is S-methyl-5'-thioadenosine phosphorylase, found in Tuber melanosporum (strain Mel28) (Perigord black truffle).